The following is a 102-amino-acid chain: Small ribosomal subunit protein uS10 (102 aa).

It belongs to the universal ribosomal protein uS10 family. In terms of assembly, part of the 30S ribosomal subunit.

Functionally, involved in the binding of tRNA to the ribosomes. This Streptococcus equi subsp. zooepidemicus (strain MGCS10565) protein is Small ribosomal subunit protein uS10.